Reading from the N-terminus, the 385-residue chain is Isomaltose glucohydrolase (385 aa).

Trp-125 serves as a coordination point for substrate. The active-site Proton acceptor is Asp-175. The active-site Proton donor is Glu-178. Glu-335 serves as the catalytic Proton acceptor.

It belongs to the glycosyl hydrolase 15 family.

The protein resides in the cytoplasm. The enzyme catalyses isomaltose + H2O = beta-D-glucose + D-glucose. Functionally, involved in the intracellular degradation of the cyclic tetrasaccharide cyclobis-(1-6)-alpha-nigerosyl (CNN) formed extracellularly from starch. Catalyzes the hydrolysis of alpha-1,6-glucosidic linkage from the non-reducing end of isomaltose to yield beta-D-glucose and D-glucose. Can also act on panose and isomaltotriose at a lower rate. It displays low or no activity toward CNN and the general GH15 enzyme substrates such as maltose, soluble starch or dextran. The protein is Isomaltose glucohydrolase of Kribbella flavida (strain DSM 17836 / JCM 10339 / NBRC 14399).